The primary structure comprises 38 residues: Iota-conotoxin-like L11.5 (38 aa).

4 cysteine pairs are disulfide-bonded: Cys-5-Cys-19, Cys-12-Cys-24, Cys-18-Cys-29, and Cys-23-Cys-36.

It belongs to the conotoxin I1 superfamily. As to expression, expressed by the venom duct.

It is found in the secreted. In terms of biological role, iota-conotoxins bind to voltage-gated sodium channels (Nav) and act as agonists by shifting the voltage-dependence of activation to more hyperpolarized levels. Produces general excitatory symptoms. In Conus lynceus (Lynceus cone), this protein is Iota-conotoxin-like L11.5.